A 275-amino-acid polypeptide reads, in one-letter code: Large ribosomal subunit protein uL2 (275 aa).

Disordered regions lie at residues 24 to 54 and 223 to 275; these read LYKG…VRHQ and VAMN…RHKR. 2 stretches are compositionally biased toward basic and acidic residues: residues 25 to 38 and 229 to 241; these read YKGR…EKKT and DHPH…RTGE.

Belongs to the universal ribosomal protein uL2 family. Part of the 50S ribosomal subunit. Forms a bridge to the 30S subunit in the 70S ribosome.

One of the primary rRNA binding proteins. Required for association of the 30S and 50S subunits to form the 70S ribosome, for tRNA binding and peptide bond formation. It has been suggested to have peptidyltransferase activity; this is somewhat controversial. Makes several contacts with the 16S rRNA in the 70S ribosome. This chain is Large ribosomal subunit protein uL2, found in Azoarcus sp. (strain BH72).